A 167-amino-acid polypeptide reads, in one-letter code: MIRLSLFISLLLTSVAVLADVQINIRGNVYIPPCTINNGQNIVVDFGNINPEHVDNSRGEVTKNISISCPYKSGSLWIKVTGNTMGVGQNNVLATNITHFGIALYQGKGMSTPLTLGNGSGNGYRVTAGLDTARSTFTFTSVPFRNGSGILNGGDFRTTASMSMIYN.

The N-terminal stretch at 1-18 is a signal peptide; sequence MIRLSLFISLLLTSVAVL.

The protein localises to the secreted. The protein resides in the fimbrium. Fimbriae (also called pili), polar filaments radiating from the surface of the bacterium to a length of 0.5-1.5 micrometers and numbering 100-300 per cell, enable bacteria to colonize the epithelium of specific host organs. This Escherichia coli protein is Minor fimbrial protein PrsF (prsF).